The following is a 130-amino-acid chain: Holo-[acyl-carrier-protein] synthase (130 aa).

The Mg(2+) site is built by aspartate 9 and glutamate 58.

It belongs to the P-Pant transferase superfamily. AcpS family. Requires Mg(2+) as cofactor.

It is found in the cytoplasm. The catalysed reaction is apo-[ACP] + CoA = holo-[ACP] + adenosine 3',5'-bisphosphate + H(+). Functionally, transfers the 4'-phosphopantetheine moiety from coenzyme A to a Ser of acyl-carrier-protein. The polypeptide is Holo-[acyl-carrier-protein] synthase (Mycobacterium bovis (strain ATCC BAA-935 / AF2122/97)).